The sequence spans 264 residues: Orotidine 5'-phosphate decarboxylase (264 aa).

Substrate-binding positions include Asp-40, 62–64, 93–102, Tyr-214, and Arg-233; these read KTH and DRKFADIGNT. The active-site Proton donor is Lys-95.

This sequence belongs to the OMP decarboxylase family.

The catalysed reaction is orotidine 5'-phosphate + H(+) = UMP + CO2. It participates in pyrimidine metabolism; UMP biosynthesis via de novo pathway; UMP from orotate: step 2/2. The protein is Orotidine 5'-phosphate decarboxylase (ura4) of Schizosaccharomyces pombe (strain 972 / ATCC 24843) (Fission yeast).